The following is a 222-amino-acid chain: Cytidylate kinase (222 aa).

7–15 (GPSASGKST) lines the ATP pocket.

The protein belongs to the cytidylate kinase family. Type 1 subfamily.

The protein resides in the cytoplasm. It carries out the reaction CMP + ATP = CDP + ADP. The enzyme catalyses dCMP + ATP = dCDP + ADP. The chain is Cytidylate kinase from Aquifex aeolicus (strain VF5).